The sequence spans 419 residues: MFTRDMNIATFDPELFEAMSNEVVRQEEHIELIASENYCSPRVLEAQGSQLTNKYAEGYPGKRYYGGCEYVDIAEQLAIDRAKELFGATYANVQPHAGSQANAAVFQALVTPGGKVLGMSLAHGGHLTHGSHVSFSGKSYEAFQYGLHPETGDIDYEELERLAVEHKPEMIIGGFSAFSGVVDWARMRTIADKVGAYFFVDMAHVAGLIAAGLYPNPVPHAHVVTTTTHKTLAGPRGGLIISGCDDEAIYKKLNSAVFPGGQGGPLMHIIAAKAVAFKEALSPEFKVYQQNVLANALAMVDVLQDRGYKVVSNGTQNHLLLLDLIDKDITGKDADAALGKAHITVNKNSVPNDPRSPFVTSGLRLGTPAITRRGFGIEETKALTGWICDILDDIENEDVSKRVQDQVKELCARFPVYQK.

Residues Leu-121 and 125–127 each bind (6S)-5,6,7,8-tetrahydrofolate; that span reads GHL. Position 230 is an N6-(pyridoxal phosphate)lysine (Lys-230). 356–358 lines the (6S)-5,6,7,8-tetrahydrofolate pocket; it reads SPF.

This sequence belongs to the SHMT family. As to quaternary structure, homodimer. The cofactor is pyridoxal 5'-phosphate.

It localises to the cytoplasm. It carries out the reaction (6R)-5,10-methylene-5,6,7,8-tetrahydrofolate + glycine + H2O = (6S)-5,6,7,8-tetrahydrofolate + L-serine. The protein operates within one-carbon metabolism; tetrahydrofolate interconversion. It participates in amino-acid biosynthesis; glycine biosynthesis; glycine from L-serine: step 1/1. Functionally, catalyzes the reversible interconversion of serine and glycine with tetrahydrofolate (THF) serving as the one-carbon carrier. This reaction serves as the major source of one-carbon groups required for the biosynthesis of purines, thymidylate, methionine, and other important biomolecules. Also exhibits THF-independent aldolase activity toward beta-hydroxyamino acids, producing glycine and aldehydes, via a retro-aldol mechanism. This is Serine hydroxymethyltransferase 1 from Colwellia psychrerythraea (strain 34H / ATCC BAA-681) (Vibrio psychroerythus).